A 312-amino-acid chain; its full sequence is Nicotinamide adenine dinucleotide transporter 1, chloroplastic (312 aa).

Solcar repeat units follow at residues 11 to 103, 111 to 199, and 211 to 299; these read KNVL…LKSF, LSVG…IKVY, and LNAR…VHRF. The next 6 membrane-spanning stretches (helical) occupy residues 17–37, 78–98, 117–137, 171–191, 216–232, and 271–293; these read AAAG…LDVI, GLSP…TMYD, VLAA…LWVV, GLYS…IQFP, VAVA…TLTY, and FYRG…FTSF.

This sequence belongs to the mitochondrial carrier (TC 2.A.29) family. As to expression, highly expressed in young leaf mesophyll cells, root tips and at the branches of adventitious roots. Low expression in all flower tissues and not detected in siliques and seeds.

Its subcellular location is the plastid. The protein localises to the chloroplast membrane. Its activity is regulated as follows. Inhibited by pyridoxal 5'-phosphate, bathophenanthroline, tannic acid, mersalyl, mercuric chloride, p-hydroxymercuribenzoate, p-hydroxymercuribenzoate sulfonate, bromocresol purple and N-ethylmaleimide. Its function is as follows. Mediates the NAD(+) import into chloroplast. Favors the NAD(+)(in)/ADP or AMP(out) antiport exchange, but is also able to catalyze a low unidirectional transport (uniport) of NAD(+). Transports NAD(+), nicotinic acid adenine dinucleotide, nicotinamide mononucleotide, nicotinic acid mononucleotide, FAD, FMN, TTP, TDP, TMP, UTP, UDP, UMP, CTP, CDP, CMP, GTP, GDP, GMP, 3'-AMP, ATP, ADP, and AMP, has low transport activity with cAMP, pyrophosphate, NADH and alpha-NAD(+), and has no activity with NADP(+), NADPH, nicotinamide, nicotinic acid, adenosine, thiamine mono- or diphosphate, inorganic phosphate, CoA, folate, NaCl, malate, malonate, citrate, fumarate, aspartate, glutamate, S-adenosylmethionine, lysine, arginine, and ornithine. This Arabidopsis thaliana (Mouse-ear cress) protein is Nicotinamide adenine dinucleotide transporter 1, chloroplastic (NDT1).